Consider the following 837-residue polypeptide: V-type proton ATPase 116 kDa subunit a 1 (837 aa).

At 1–388 (MGELFRSEEM…DAYGIGTYRE (388 aa)) the chain is on the cytoplasmic side. Phosphothreonine occurs at positions 250 and 360. A Phosphotyrosine modification is found at Y364. Residues 389 to 407 (INPAPYTIITFPFLFAVMF) traverse the membrane as a helical segment. Residues 408–409 (GD) lie on the Vacuolar side of the membrane. Residues 410 to 426 (FGHGILMTLFAVWMVLR) traverse the membrane as a helical segment. Over 427–441 (ESRILSQKNENEMFS) the chain is Cytoplasmic. A helical transmembrane segment spans residues 442-471 (TVFSGRYIILLMGVFSMYTGLIYNDCFSKS). The Vacuolar portion of the chain corresponds to 472-534 (LNIFGSSWSV…ATNKLTFLNS (63 aa)). Residue N488 is glycosylated (N-linked (GalNAc...) asparagine). Residues 535-554 (FKMKMSVILGIIHMLFGVSL) traverse the membrane as a helical segment. The Cytoplasmic portion of the chain corresponds to 555–572 (SLFNHIYFKKPLNIYFGF). Residues 573-593 (IPEIIFMTSLFGYLVILIFYK) traverse the membrane as a helical segment. Topologically, residues 594-638 (WTAYDAHTSENAPSLLIHFINMFLFSYPESGYSMLYSGQKGIQCF) are vacuolar. A helical membrane pass occupies residues 639-658 (LVVVALLCVPWMLLFKPLVL). At 659 to 724 (RRQYLRRKHL…DTMVHQAIHT (66 aa)) the chain is on the cytoplasmic side. A helical transmembrane segment spans residues 725–749 (IEYCLGCISNTASYLRLWALSLAHA). Topologically, residues 750-770 (QLSEVLWTMVIHIGLSVKSLA) are vacuolar. A helical transmembrane segment spans residues 771 to 809 (GGLVLFFFFTAFATLTVAILLIMEGLSAFLHALRLHWVE). Over 810-837 (FQNKFYSGTGFKFLPFSFEHIREGKFEE) the chain is Cytoplasmic.

It belongs to the V-ATPase 116 kDa subunit family. V-ATPase is a heteromultimeric enzyme made up of two complexes: the ATP-hydrolytic V1 complex and the proton translocation V0 complex. The V1 complex consists of three catalytic AB heterodimers that form a heterohexamer, three peripheral stalks each consisting of EG heterodimers, one central rotor including subunits D and F, and the regulatory subunits C and H. The proton translocation complex V0 consists of the proton transport subunit a, a ring of proteolipid subunits c9c'', rotary subunit d, subunits e and f, and the accessory subunits ATP6AP1/Ac45 and ATP6AP2/PRR. Interacts with SPAAR.

The protein localises to the cytoplasmic vesicle. Its subcellular location is the clathrin-coated vesicle membrane. It localises to the secretory vesicle. The protein resides in the synaptic vesicle membrane. It is found in the melanosome. Subunit of the V0 complex of vacuolar(H+)-ATPase (V-ATPase), a multisubunit enzyme composed of a peripheral complex (V1) that hydrolyzes ATP and a membrane integral complex (V0) that transports protons across cellular membranes. V-ATPase is responsible for the acidification of various organelles, such as lysosomes, endosomes, the trans-Golgi network, and secretory granules, including synaptic vesicles. In certain cell types, can be exported to the plasma membrane, where it is involved in the acidification of the extracellular environment. Required for assembly and activity of the vacuolar ATPase. Through its action on compartment acidification, plays an essential role in neuronal development in terms of integrity and connectivity of neurons. The protein is V-type proton ATPase 116 kDa subunit a 1 (ATP6V0A1) of Homo sapiens (Human).